Here is a 165-residue protein sequence, read N- to C-terminus: Type II secretion system protein M (165 aa).

Residues 1 to 22 lie on the Cytoplasmic side of the membrane; it reads MKELLAPVQAWWRSVTPREQKM. The helical transmembrane segment at 23–43 threads the bilayer; that stretch reads VMGMGALTVLAIAYWGIWQPL. Residues 44–165 are Periplasmic-facing; the sequence is SERTAQAQAR…VKRLQLKRGG (122 aa).

Belongs to the GSP M family. As to quaternary structure, type II secretion system is composed of four main components: the outer membrane complex, the inner membrane complex, the cytoplasmic secretion ATPase and the periplasm-spanning pseudopilus. Forms homodimers. Interacts with EpsL/GspL. Interacts with EpsE/GspE. Interacts with EpsF/GspF.

The protein localises to the cell inner membrane. In terms of biological role, inner membrane component of the type II secretion system required for the energy-dependent secretion of extracellular factors such as proteases and toxins from the periplasm. Plays a role in the complex assembly and recruits EpsL resulting in a stable complex in the inner membrane. Provides thus a link between the energy-providing EpsE protein in the cytoplasm and the rest of the T2SS machinery. This Vibrio cholerae serotype O1 (strain ATCC 39315 / El Tor Inaba N16961) protein is Type II secretion system protein M (epsM).